A 248-amino-acid chain; its full sequence is 2,3-bisphosphoglycerate-dependent phosphoglycerate mutase (248 aa).

Residues 8 to 15 (RHGESEWN), 21 to 22 (TG), Arg60, 87 to 90 (ERHY), Lys98, 114 to 115 (RR), and 183 to 184 (GN) each bind substrate. The active-site Tele-phosphohistidine intermediate is the His9. Catalysis depends on Glu87, which acts as the Proton donor/acceptor.

This sequence belongs to the phosphoglycerate mutase family. BPG-dependent PGAM subfamily.

The catalysed reaction is (2R)-2-phosphoglycerate = (2R)-3-phosphoglycerate. It participates in carbohydrate degradation; glycolysis; pyruvate from D-glyceraldehyde 3-phosphate: step 3/5. Its function is as follows. Catalyzes the interconversion of 2-phosphoglycerate and 3-phosphoglycerate. This chain is 2,3-bisphosphoglycerate-dependent phosphoglycerate mutase, found in Borrelia garinii subsp. bavariensis (strain ATCC BAA-2496 / DSM 23469 / PBi) (Borreliella bavariensis).